Consider the following 291-residue polypeptide: MTTLAIDIGGTKLAAALIDNNLRISQRRELPTPASKTPDALREALKALVEPLRAEARQVAIASTGIIQEGMLLALNPHNLGGLLHFPLVQTLETIAGLPTLAVNDAQAAAWAEYHALPDDIRDMVFITVSTGVGGGVVCDGKLLTGKGGLAGHLGHTLADPHGPVCGCGRVGCVEAIASGRGMAAAARDDLAGCDAKTLFIRAGEGHQQARHLVSQSAQVIARMIADVKATTDCQCVVIGGSVGLAEGYLEQVRAFLMQEPAPYHVALSAARYRHDAGLLGAALLAQGDTL.

Residues Ala5 to Lys12 and Gly132 to Cys139 each bind ATP. Positions 156, 166, 168, and 173 each coordinate Zn(2+).

This sequence belongs to the ROK (NagC/XylR) family. NanK subfamily. As to quaternary structure, homodimer.

The enzyme catalyses an N-acyl-D-mannosamine + ATP = an N-acyl-D-mannosamine 6-phosphate + ADP + H(+). Its pathway is amino-sugar metabolism; N-acetylneuraminate degradation; D-fructose 6-phosphate from N-acetylneuraminate: step 2/5. Its function is as follows. Catalyzes the phosphorylation of N-acetylmannosamine (ManNAc) to ManNAc-6-P. This chain is N-acetylmannosamine kinase, found in Salmonella agona (strain SL483).